The following is a 206-amino-acid chain: MKKTLIIGVTGGSASGKTSVSHAILETFSNERIAMIEHDSYYKDQSHLTFEERTKTNYDHPLAFDTDYLIAQLKELQYGRAVDIPIYDYAKHTRSQETYRQEPVDVLIVEGILVLEDERLRDLMDIKIFVDTDDDVRIIRRIRRDIEERGRTLDSVITQYLDAVKPMYHQFIEPTKRYADVIIPEGVSNTVGVDIITTKIASILND.

11 to 18 (GGSASGKT) contacts ATP.

It belongs to the uridine kinase family.

The protein localises to the cytoplasm. It catalyses the reaction uridine + ATP = UMP + ADP + H(+). It carries out the reaction cytidine + ATP = CMP + ADP + H(+). Its pathway is pyrimidine metabolism; CTP biosynthesis via salvage pathway; CTP from cytidine: step 1/3. It functions in the pathway pyrimidine metabolism; UMP biosynthesis via salvage pathway; UMP from uridine: step 1/1. This chain is Uridine kinase, found in Lactococcus lactis subsp. lactis (strain IL1403) (Streptococcus lactis).